A 344-amino-acid polypeptide reads, in one-letter code: Dihydroorotase (344 aa).

Residues His-13 and His-15 each contribute to the Zn(2+) site. Substrate is bound by residues 15 to 17 (HFR) and Asn-41. Residues Lys-98, His-135, and His-173 each contribute to the Zn(2+) site. Residue Lys-98 is modified to N6-carboxylysine. His-135 is a substrate binding site. A substrate-binding site is contributed by Leu-218. A Zn(2+)-binding site is contributed by Asp-246. Asp-246 is an active-site residue. Substrate contacts are provided by His-250 and Ala-262.

This sequence belongs to the metallo-dependent hydrolases superfamily. DHOase family. Class II DHOase subfamily. Homodimer. The cofactor is Zn(2+).

The enzyme catalyses (S)-dihydroorotate + H2O = N-carbamoyl-L-aspartate + H(+). Its pathway is pyrimidine metabolism; UMP biosynthesis via de novo pathway; (S)-dihydroorotate from bicarbonate: step 3/3. Its function is as follows. Catalyzes the reversible cyclization of carbamoyl aspartate to dihydroorotate. In Pseudoalteromonas atlantica (strain T6c / ATCC BAA-1087), this protein is Dihydroorotase.